The following is a 118-amino-acid chain: NADH-ubiquinone oxidoreductase chain 3 (118 aa).

3 helical membrane passes run 9 to 29 (IYLV…FLFA), 62 to 82 (LVSI…PWAV), and 87 to 107 (IDLF…IGFL).

The protein belongs to the complex I subunit 3 family.

The protein localises to the mitochondrion membrane. It catalyses the reaction a ubiquinone + NADH + 5 H(+)(in) = a ubiquinol + NAD(+) + 4 H(+)(out). Functionally, core subunit of the mitochondrial membrane respiratory chain NADH dehydrogenase (Complex I) that is believed to belong to the minimal assembly required for catalysis. Complex I functions in the transfer of electrons from NADH to the respiratory chain. The immediate electron acceptor for the enzyme is believed to be ubiquinone. This is NADH-ubiquinone oxidoreductase chain 3 (ND3) from Triticum aestivum (Wheat).